We begin with the raw amino-acid sequence, 473 residues long: Spliceosome-associated protein CWC27 homolog (473 aa).

Position 2 is an N-acetylserine (serine 2). Positions 11-166 (TNGKVLLKTT…NPHKIKSCEV (156 aa)) constitute a PPIase cyclophilin-type domain. Basic and acidic residues predominate over residues 177–193 (REIKRPKKEKPEEEVKK). Disordered regions lie at residues 177-386 (REIK…EDQT) and 399-473 (QAIA…KERR). Residues 206–230 (SFGEEAEEEEEEVNRVSQSMKGKSK) adopt a coiled-coil conformation. The segment covering 231-241 (SSHDLLKDDPH) has biased composition (basic and acidic residues). Acidic residues predominate over residues 257–266 (GDLDDGGEGE). Composition is skewed to basic and acidic residues over residues 267–287 (SAEH…ERIA), 305–348 (EVEK…KRSE), and 360–372 (EYRR…EALR). A coiled-coil region spans residues 305–378 (EVEKKSVNRS…EALRKQQSKK (74 aa)). Serine 347 is subject to Phosphoserine. Residues 405 to 419 (PENDIPETEVEDDEG) are compositionally biased toward acidic residues. 2 stretches are compositionally biased toward basic and acidic residues: residues 426–438 (QFED…KDAS) and 458–473 (RREE…KERR).

The protein belongs to the cyclophilin-type PPIase family. In terms of assembly, part of the activated spliceosome B/catalytic step 1 spliceosome, one of the forms of the spliceosome which has a well-formed active site but still cannot catalyze the branching reaction and is composed at least of 52 proteins, the U2, U5 and U6 snRNAs and the pre-mRNA. Recruited during early steps of activated spliceosome B maturation, it is probably one of the first proteins released from this complex as he matures to the spliceosome C complex. Component of the minor spliceosome, which splices U12-type introns.

It is found in the nucleus. Its function is as follows. As part of the spliceosome, plays a role in pre-mRNA splicing. Probable inactive PPIase with no peptidyl-prolyl cis-trans isomerase activity. As a component of the minor spliceosome, involved in the splicing of U12-type introns in pre-mRNAs. The chain is Spliceosome-associated protein CWC27 homolog from Pongo abelii (Sumatran orangutan).